A 118-amino-acid polypeptide reads, in one-letter code: LYR motif containing protein 1 (118 aa).

Residues 91–118 (TQKGRKLRAQQRLRKQAKPVYLQSQDET) form a disordered region. Over residues 93 to 107 (KGRKLRAQQRLRKQA) the composition is skewed to basic residues.

It belongs to the complex I LYR family.

The chain is LYR motif containing protein 1 (lyrm1) from Danio rerio (Zebrafish).